The sequence spans 86 residues: UPF0297 protein SSP1144 (86 aa).

This sequence belongs to the UPF0297 family.

The sequence is that of UPF0297 protein SSP1144 from Staphylococcus saprophyticus subsp. saprophyticus (strain ATCC 15305 / DSM 20229 / NCIMB 8711 / NCTC 7292 / S-41).